We begin with the raw amino-acid sequence, 145 residues long: Protein SprT-like (145 aa).

Residues 4 to 140 form the SprT-like domain; it reads TNYVQEVSLA…VCGNCHGKLI (137 aa). H64 is a binding site for Zn(2+). E65 is an active-site residue. Zn(2+) is bound at residue H68.

The protein belongs to the SprT family. It depends on Zn(2+) as a cofactor.

The protein localises to the cytoplasm. This chain is Protein SprT-like, found in Streptococcus pyogenes serotype M6 (strain ATCC BAA-946 / MGAS10394).